Consider the following 134-residue polypeptide: Parvalbumin-like EF-hand-containing protein (134 aa).

2 consecutive EF-hand domains span residues Q55–S90 and L96–P131. Residues D68, D70, S72, F74, E76, E79, D109, D113, and E120 each coordinate Ca(2+).

Belongs to the parvalbumin family.

The polypeptide is Parvalbumin-like EF-hand-containing protein (Homo sapiens (Human)).